The chain runs to 324 residues: NADH-ubiquinone oxidoreductase chain 1 (324 aa).

Helical transmembrane passes span Ile-9–Leu-29, Pro-43–Ile-63, Ile-75–Leu-95, Leu-106–Gly-126, Ile-146–Phe-166, Ser-177–Ala-197, Leu-228–Gly-250, Glu-259–Val-279, and Phe-299–Gly-319.

It belongs to the complex I subunit 1 family.

Its subcellular location is the mitochondrion inner membrane. The catalysed reaction is a ubiquinone + NADH + 5 H(+)(in) = a ubiquinol + NAD(+) + 4 H(+)(out). Core subunit of the mitochondrial membrane respiratory chain NADH dehydrogenase (Complex I) that is believed to belong to the minimal assembly required for catalysis. Complex I functions in the transfer of electrons from NADH to the respiratory chain. The immediate electron acceptor for the enzyme is believed to be ubiquinone. In Tetraodon nigroviridis (Spotted green pufferfish), this protein is NADH-ubiquinone oxidoreductase chain 1 (MT-ND1).